The sequence spans 394 residues: Elongation factor Tu 1 (394 aa).

A tr-type G domain is found at 10–204 (KPHVNVGTIG…ALDTYIPEPE (195 aa)). Residues 19–26 (GHVDHGKT) form a G1 region. 19–26 (GHVDHGKT) contributes to the GTP binding site. Residue threonine 26 participates in Mg(2+) binding. The tract at residues 60–64 (GITIS) is G2. The interval 81–84 (DCPG) is G3. Residues 81-85 (DCPGH) and 136-139 (NKCD) each bind GTP. The interval 136 to 139 (NKCD) is G4. The interval 174–176 (SAL) is G5.

Belongs to the TRAFAC class translation factor GTPase superfamily. Classic translation factor GTPase family. EF-Tu/EF-1A subfamily. Monomer.

The protein resides in the cytoplasm. It catalyses the reaction GTP + H2O = GDP + phosphate + H(+). Functionally, GTP hydrolase that promotes the GTP-dependent binding of aminoacyl-tRNA to the A-site of ribosomes during protein biosynthesis. The polypeptide is Elongation factor Tu 1 (Vibrio vulnificus (strain CMCP6)).